We begin with the raw amino-acid sequence, 22 residues long: Pectinesterase (22 aa).

Aspartate 6 acts as the Proton donor in catalysis. Substrate contacts are provided by arginine 19 and tryptophan 21.

Belongs to the pectinesterase family.

The protein resides in the secreted. It is found in the cell wall. The catalysed reaction is [(1-&gt;4)-alpha-D-galacturonosyl methyl ester](n) + n H2O = [(1-&gt;4)-alpha-D-galacturonosyl](n) + n methanol + n H(+). The protein operates within glycan metabolism; pectin degradation; 2-dehydro-3-deoxy-D-gluconate from pectin: step 1/5. The sequence is that of Pectinesterase from Capsicum chinense (Scotch bonnet).